The primary structure comprises 433 residues: MTATWEKKEGNEGLLTVTVPAEKVNKALDQAFKKVVKQINVPGFRKGKVPRPIFEQRFGVEALYQDAIDILLPDAYGEAIDETDIKPVAQPEVSVTQIEKGKDFIFEATVTVEPEVKLGDYKGLEIEKQETELSDDELQEAIDHSLGHLAEMVVKEDGVVENGDTVNIDFSGSVDGEEFEGGQAEGYDLEIGSGSFIPGFEEQLEGMKVDEEKDVVVTFPEEYHAEELAGKEATFKTKVNEIKFKEVPELTDEIANELDAEANTVDEYKENLRKRLAEQKATDAENVEKEEAITKATDNTTIDIPEAMINTELDRMVSEFAQRIQQQGLDLQTYFQISGQDETQLREQMKDDAEQRVKTNLTLTAIAEAEKIEATDEDIDKELEKMSKQFNISVEDIKNTLGNTDIIKNDVRIQKVIDLLRDNAKFVEGTKED.

A PPIase FKBP-type domain is found at 163–248 (GDTVNIDFSG…VNEIKFKEVP (86 aa)).

The protein belongs to the FKBP-type PPIase family. Tig subfamily.

The protein resides in the cytoplasm. It carries out the reaction [protein]-peptidylproline (omega=180) = [protein]-peptidylproline (omega=0). Functionally, involved in protein export. Acts as a chaperone by maintaining the newly synthesized protein in an open conformation. Functions as a peptidyl-prolyl cis-trans isomerase. The polypeptide is Trigger factor (Staphylococcus aureus (strain Newman)).